A 55-amino-acid chain; its full sequence is Conotoxin vc5b (55 aa).

An N-terminal signal peptide occupies residues 1–15 (VILLLLIASAPSVDA). Positions 16–41 (QPKTKDDVPLAPLHDNAKSALQHLNQ) are excised as a propeptide. Q53 is subject to Glutamine amide.

Post-translationally, contains 2 disulfide bonds that can be either 'C1-C3, C2-C4' or 'C1-C4, C2-C3', since these disulfide connectivities have been observed for conotoxins with cysteine framework V (for examples, see AC P0DQQ7 and AC P81755). Expressed by the venom duct.

It is found in the secreted. The protein is Conotoxin vc5b of Conus victoriae (Queen Victoria cone).